A 265-amino-acid chain; its full sequence is Shikimate dehydrogenase (NADP(+)) (265 aa).

Shikimate contacts are provided by residues 14–16 and Thr-61; that span reads SLS. Lys-65 acts as the Proton acceptor in catalysis. The shikimate site is built by Asn-85 and Asp-100. NADP(+) is bound by residues 123 to 127, 146 to 151, and Ala-209; these read GAGGA and NRTESK. Tyr-211 is a binding site for shikimate. Gly-232 contacts NADP(+).

Belongs to the shikimate dehydrogenase family. Homodimer.

The enzyme catalyses shikimate + NADP(+) = 3-dehydroshikimate + NADPH + H(+). Its pathway is metabolic intermediate biosynthesis; chorismate biosynthesis; chorismate from D-erythrose 4-phosphate and phosphoenolpyruvate: step 4/7. Its function is as follows. Involved in the biosynthesis of the chorismate, which leads to the biosynthesis of aromatic amino acids. Catalyzes the reversible NADPH linked reduction of 3-dehydroshikimate (DHSA) to yield shikimate (SA). In Haloarcula marismortui (strain ATCC 43049 / DSM 3752 / JCM 8966 / VKM B-1809) (Halobacterium marismortui), this protein is Shikimate dehydrogenase (NADP(+)).